Consider the following 180-residue polypeptide: Large ribosomal subunit protein uL6 (180 aa).

It belongs to the universal ribosomal protein uL6 family. In terms of assembly, part of the 50S ribosomal subunit.

Functionally, this protein binds to the 23S rRNA, and is important in its secondary structure. It is located near the subunit interface in the base of the L7/L12 stalk, and near the tRNA binding site of the peptidyltransferase center. The sequence is that of Large ribosomal subunit protein uL6 from Anaeromyxobacter dehalogenans (strain 2CP-1 / ATCC BAA-258).